The chain runs to 106 residues: UPF0145 protein (106 aa).

Belongs to the UPF0145 family.

This is UPF0145 protein from Listeria grayi (Listeria murrayi).